A 187-amino-acid chain; its full sequence is UPF0301 protein CT0663 (187 aa).

Belongs to the UPF0301 (AlgH) family.

The polypeptide is UPF0301 protein CT0663 (Chlorobaculum tepidum (strain ATCC 49652 / DSM 12025 / NBRC 103806 / TLS) (Chlorobium tepidum)).